Consider the following 344-residue polypeptide: Phenylalanine--tRNA ligase alpha subunit (344 aa).

E256 serves as a coordination point for Mg(2+).

The protein belongs to the class-II aminoacyl-tRNA synthetase family. Phe-tRNA synthetase alpha subunit type 1 subfamily. As to quaternary structure, tetramer of two alpha and two beta subunits. Mg(2+) is required as a cofactor.

Its subcellular location is the cytoplasm. The catalysed reaction is tRNA(Phe) + L-phenylalanine + ATP = L-phenylalanyl-tRNA(Phe) + AMP + diphosphate + H(+). This is Phenylalanine--tRNA ligase alpha subunit from Anoxybacillus flavithermus (strain DSM 21510 / WK1).